The primary structure comprises 123 residues: Sperm-associated antigen 11A (123 aa).

The signal sequence occupies residues 1–25; that stretch reads MRQRLLPSVTSLLLVALLFPGSSQA. A glycan (N-linked (GlcNAc...) asparagine) is linked at N29.

It belongs to the SPAG11 family.

It localises to the secreted. Its function is as follows. Has antimicrobial activity against E.coli. Plays a role in the defense response in the male reproductive tract, contributing to sperm maturation, storage and protection. The chain is Sperm-associated antigen 11A from Homo sapiens (Human).